We begin with the raw amino-acid sequence, 364 residues long: Chorismate synthase (364 aa).

Residue Arg-47 participates in NADP(+) binding. Residues 124–126, Gly-287, 302–306, and Arg-328 contribute to the FMN site; these read RAS and KPTAT.

This sequence belongs to the chorismate synthase family. As to quaternary structure, homotetramer. FMNH2 serves as cofactor.

It carries out the reaction 5-O-(1-carboxyvinyl)-3-phosphoshikimate = chorismate + phosphate. The protein operates within metabolic intermediate biosynthesis; chorismate biosynthesis; chorismate from D-erythrose 4-phosphate and phosphoenolpyruvate: step 7/7. In terms of biological role, catalyzes the anti-1,4-elimination of the C-3 phosphate and the C-6 proR hydrogen from 5-enolpyruvylshikimate-3-phosphate (EPSP) to yield chorismate, which is the branch point compound that serves as the starting substrate for the three terminal pathways of aromatic amino acid biosynthesis. This reaction introduces a second double bond into the aromatic ring system. This is Chorismate synthase from Prochlorococcus marinus (strain MIT 9515).